The primary structure comprises 638 residues: Plasma kallikrein (638 aa).

Residues 1–19 (MILFKQVGYFVSLFATVSC) form the signal peptide. 4 Apple domains span residues 21–104 (CLSQ…LKQC), 111–194 (CHQD…LKSC), 201–284 (CPMD…LFTC), and 292–375 (CHFK…LRLC). Cystine bridges form between Cys21–Cys104, Cys47–Cys77, Cys51–Cys57, Cys111–Cys194, Cys137–Cys166, Cys141–Cys147, Cys201–Cys284, Cys227–Cys256, Cys231–Cys237, Cys292–Cys375, Cys318–Cys347, Cys322–Cys328, Cys340–Cys345, Cys383–Cys503, Cys419–Cys435, Cys517–Cys584, Cys548–Cys563, and Cys574–Cys602. Asn127 is a glycosylation site (N-linked (GlcNAc...) asparagine). Residue Asn215 is glycosylated (N-linked (GlcNAc...) asparagine). N-linked (GlcNAc...) asparagine glycosylation occurs at Asn308. Positions 391–626 (IVGGTNSSLG…YIDWILEKIQ (236 aa)) constitute a Peptidase S1 domain. N-linked (GlcNAc...) asparagine glycosylation occurs at Asn396. The Charge relay system role is filled by His434. Asn453 is a glycosylation site (N-linked (GlcNAc...) asparagine). Residue Asp483 is the Charge relay system of the active site. N-linked (GlcNAc...) asparagine glycosylation occurs at Asn494. Ser578 acts as the Charge relay system in catalysis.

It belongs to the peptidase S1 family. Plasma kallikrein subfamily. Forms a heterodimer with SERPINA5. The zymogen is activated by factor XIIa, which cleaves the molecule into a light chain, which contains the active site, and a heavy chain, which associates with HMW kininogen. These chains are linked by one or more disulfide bonds.

It localises to the secreted. It carries out the reaction Cleaves selectively Arg-|-Xaa and Lys-|-Xaa bonds, including Lys-|-Arg and Arg-|-Ser bonds in (human) kininogen to release bradykinin.. Inhibited by SERPINA5. Its function is as follows. The enzyme cleaves Lys-Arg and Arg-Ser bonds. It activates, in a reciprocal reaction, factor XII after its binding to a negatively charged surface. It also releases bradykinin from HMW kininogen and may also play a role in the renin-angiotensin system by converting prorenin into renin. The sequence is that of Plasma kallikrein (Klkb1) from Rattus norvegicus (Rat).